A 325-amino-acid chain; its full sequence is Foldase protein PrsA (325 aa).

The N-terminal stretch at 1–20 (MKLMNKIIVPVTASALLLGA) is a signal peptide. Cys21 is lipidated: N-palmitoyl cysteine. Residue Cys21 is the site of S-diacylglycerol cysteine attachment. The PpiC domain maps to 139-245 (ENSKKASHIL…YGYHIIKADK (107 aa)). 2 disordered regions span residues 159 to 202 (EGLS…KKDG) and 303 to 325 (PDKI…NSGS).

The protein belongs to the PrsA family.

The protein resides in the cell membrane. It carries out the reaction [protein]-peptidylproline (omega=180) = [protein]-peptidylproline (omega=0). Its function is as follows. Plays a major role in protein secretion by helping the post-translocational extracellular folding of several secreted proteins. The protein is Foldase protein PrsA of Staphylococcus epidermidis (strain ATCC 12228 / FDA PCI 1200).